The chain runs to 204 residues: Probable nicotinate-nucleotide adenylyltransferase (204 aa).

It belongs to the NadD family.

It carries out the reaction nicotinate beta-D-ribonucleotide + ATP + H(+) = deamido-NAD(+) + diphosphate. It participates in cofactor biosynthesis; NAD(+) biosynthesis; deamido-NAD(+) from nicotinate D-ribonucleotide: step 1/1. Functionally, catalyzes the reversible adenylation of nicotinate mononucleotide (NaMN) to nicotinic acid adenine dinucleotide (NaAD). The chain is Probable nicotinate-nucleotide adenylyltransferase from Mycolicibacterium gilvum (strain PYR-GCK) (Mycobacterium gilvum (strain PYR-GCK)).